We begin with the raw amino-acid sequence, 230 residues long: Bidirectional sugar transporter SWEET16 (230 aa).

Residues 1 to 3 (MAD) are Extracellular-facing. The helical transmembrane segment at 4 to 24 (LSFYVGVIGNVISVLVFLSPV) threads the bilayer. The MtN3/slv 1 domain occupies 6-92 (FYVGVIGNVI…LIFLFFVPKS (87 aa)). Residues 25–40 (ETFWRIVQRRSTEEYE) lie on the Cytoplasmic side of the membrane. The helical transmembrane segment at 41–61 (CFPYICTLMSSSLWTYYGIVT) threads the bilayer. Residues 62–69 (PGEYLVST) are Extracellular-facing. Residues 70–90 (VNGFGALAESIYVLIFLFFVP) traverse the membrane as a helical segment. At 91–93 (KSR) the chain is on the cytoplasmic side. A helical transmembrane segment spans residues 94-114 (FLKTVVVVLALNVCFPVIAIA). Residues 115–128 (GTRTLFGDANSRSS) lie on the Extracellular side of the membrane. The helical transmembrane segment at 129-149 (SMGFICATLNIIMYGSPLSAI) threads the bilayer. In terms of domain architecture, MtN3/slv 2 spans 129 to 212 (SMGFICATLN…LLIYAYYRNA (84 aa)). At 150–162 (KTVVTTRSVQFMP) the chain is on the cytoplasmic side. The chain crosses the membrane as a helical span at residues 163–183 (FWLSFFLFLNGAIWGVYALLL). The Extracellular segment spans residues 184–185 (HD). A helical membrane pass occupies residues 186 to 206 (MFLLVPNGMGFFLGIMQLLIY). Topologically, residues 207 to 230 (AYYRNAEPIVEDEEGLIPNQPLLA) are cytoplasmic.

It belongs to the SWEET sugar transporter family. In terms of assembly, forms homooligomers and heterooligomers with SWEET1, SWEET7, SWEET8, SWEET9 and SWEET17. In terms of tissue distribution, mostly expressed in the cortex of mature roots, and, to a lower extent, in aerial organs such as leaves, stems, and flowers. Mainly present in vascular parenchyma cells, especially in the petiole vasculature, flower stalks and at the base of individual, not fully developed flowers.

The protein resides in the vacuole membrane. Mediates both low-affinity uptake and efflux of sugar across the vacuolar membrane. Regulates sugars homeostasis in leaves and roots by exporting/importing them through the tonoplast regarding metabolic demand. Acts as a vacuolar hexose transporter, such as glucose (Glc), fructose (Fru), and sucrose (Suc). The sequence is that of Bidirectional sugar transporter SWEET16 from Arabidopsis thaliana (Mouse-ear cress).